We begin with the raw amino-acid sequence, 314 residues long: DNA-directed RNA polymerase subunit alpha (314 aa).

Positions 1-228 (MIEIEKPKIE…EHLNIFVGLT (228 aa)) are alpha N-terminal domain (alpha-NTD). An alpha C-terminal domain (alpha-CTD) region spans residues 246–314 (EKVLEMTIEE…ELGLGLRKDD (69 aa)).

Belongs to the RNA polymerase alpha chain family. Homodimer. The RNAP catalytic core consists of 2 alpha, 1 beta, 1 beta' and 1 omega subunit. When a sigma factor is associated with the core the holoenzyme is formed, which can initiate transcription.

It carries out the reaction RNA(n) + a ribonucleoside 5'-triphosphate = RNA(n+1) + diphosphate. In terms of biological role, DNA-dependent RNA polymerase catalyzes the transcription of DNA into RNA using the four ribonucleoside triphosphates as substrates. The polypeptide is DNA-directed RNA polymerase subunit alpha (Bacillus cytotoxicus (strain DSM 22905 / CIP 110041 / 391-98 / NVH 391-98)).